The following is a 488-amino-acid chain: Glutamate--tRNA ligase (488 aa).

A 'HIGH' region motif is present at residues 16–26 (PSPTGEPHVGT). A 'KMSKS' region motif is present at residues 257-261 (KLSKR). An ATP-binding site is contributed by Lys260.

The protein belongs to the class-I aminoacyl-tRNA synthetase family. Glutamate--tRNA ligase type 1 subfamily. In terms of assembly, monomer.

The protein localises to the cytoplasm. It carries out the reaction tRNA(Glu) + L-glutamate + ATP = L-glutamyl-tRNA(Glu) + AMP + diphosphate. Functionally, catalyzes the attachment of glutamate to tRNA(Glu) in a two-step reaction: glutamate is first activated by ATP to form Glu-AMP and then transferred to the acceptor end of tRNA(Glu). In Rhizobium johnstonii (strain DSM 114642 / LMG 32736 / 3841) (Rhizobium leguminosarum bv. viciae), this protein is Glutamate--tRNA ligase.